The chain runs to 143 residues: Large ribosomal subunit protein uL13 (143 aa).

This sequence belongs to the universal ribosomal protein uL13 family. As to quaternary structure, part of the 50S ribosomal subunit.

This protein is one of the early assembly proteins of the 50S ribosomal subunit, although it is not seen to bind rRNA by itself. It is important during the early stages of 50S assembly. The polypeptide is Large ribosomal subunit protein uL13 (Dichelobacter nodosus (strain VCS1703A)).